A 260-amino-acid chain; its full sequence is Thiazole synthase (260 aa).

Catalysis depends on lysine 102, which acts as the Schiff-base intermediate with DXP. Residues glycine 163, 189-190, and 211-212 contribute to the 1-deoxy-D-xylulose 5-phosphate site; these read AG and NT.

It belongs to the ThiG family. As to quaternary structure, homotetramer. Forms heterodimers with either ThiH or ThiS.

The protein localises to the cytoplasm. The catalysed reaction is [ThiS sulfur-carrier protein]-C-terminal-Gly-aminoethanethioate + 2-iminoacetate + 1-deoxy-D-xylulose 5-phosphate = [ThiS sulfur-carrier protein]-C-terminal Gly-Gly + 2-[(2R,5Z)-2-carboxy-4-methylthiazol-5(2H)-ylidene]ethyl phosphate + 2 H2O + H(+). It functions in the pathway cofactor biosynthesis; thiamine diphosphate biosynthesis. Catalyzes the rearrangement of 1-deoxy-D-xylulose 5-phosphate (DXP) to produce the thiazole phosphate moiety of thiamine. Sulfur is provided by the thiocarboxylate moiety of the carrier protein ThiS. In vitro, sulfur can be provided by H(2)S. In Citrifermentans bemidjiense (strain ATCC BAA-1014 / DSM 16622 / JCM 12645 / Bem) (Geobacter bemidjiensis), this protein is Thiazole synthase.